Consider the following 515-residue polypeptide: ATP synthase subunit alpha (515 aa).

171 to 178 (GDRQTGKT) contacts ATP.

This sequence belongs to the ATPase alpha/beta chains family. In terms of assembly, F-type ATPases have 2 components, CF(1) - the catalytic core - and CF(0) - the membrane proton channel. CF(1) has five subunits: alpha(3), beta(3), gamma(1), delta(1), epsilon(1). CF(0) has three main subunits: a(1), b(2) and c(9-12). The alpha and beta chains form an alternating ring which encloses part of the gamma chain. CF(1) is attached to CF(0) by a central stalk formed by the gamma and epsilon chains, while a peripheral stalk is formed by the delta and b chains.

The protein localises to the cell inner membrane. It catalyses the reaction ATP + H2O + 4 H(+)(in) = ADP + phosphate + 5 H(+)(out). Its function is as follows. Produces ATP from ADP in the presence of a proton gradient across the membrane. The alpha chain is a regulatory subunit. The sequence is that of ATP synthase subunit alpha from Xanthomonas axonopodis pv. citri (strain 306).